Consider the following 305-residue polypeptide: MLKQRTIKSIVKTVGIGVHSGRKVELTLRPAAPDTGIVFSRVDLPTPVDIPASALSIGDTRLASVLQKDGVRVSTVEHLMSACAGLGIDNLYVDVTAEEIPIMDGSAATFVFLIQSAGIEEQNAAKKFIKVTKPVEIRDGDKFARLDPYFGFKLKFTIDFRHPAVDKTGQELEVDFANTSYVREIARARTFGFAHEVEMMRELGLARGGSMDNAIVLDEYRILNNDGLRYDDEFVKHKMLDAIGDLYVIGHPLLASYTAYKSGHGLNNALLRELLAHEQAYEIVTFDDPKTAPTGFGFDAQTAFA.

Zn(2+)-binding residues include His78, His237, and Asp241. The active-site Proton donor is His264.

The protein belongs to the LpxC family. Zn(2+) serves as cofactor.

It catalyses the reaction a UDP-3-O-[(3R)-3-hydroxyacyl]-N-acetyl-alpha-D-glucosamine + H2O = a UDP-3-O-[(3R)-3-hydroxyacyl]-alpha-D-glucosamine + acetate. Its pathway is glycolipid biosynthesis; lipid IV(A) biosynthesis; lipid IV(A) from (3R)-3-hydroxytetradecanoyl-[acyl-carrier-protein] and UDP-N-acetyl-alpha-D-glucosamine: step 2/6. Catalyzes the hydrolysis of UDP-3-O-myristoyl-N-acetylglucosamine to form UDP-3-O-myristoylglucosamine and acetate, the committed step in lipid A biosynthesis. This is UDP-3-O-acyl-N-acetylglucosamine deacetylase from Burkholderia mallei (strain NCTC 10247).